Consider the following 176-residue polypeptide: Large ribosomal subunit protein uL10 (176 aa).

The protein belongs to the universal ribosomal protein uL10 family. Part of the ribosomal stalk of the 50S ribosomal subunit. The N-terminus interacts with L11 and the large rRNA to form the base of the stalk. The C-terminus forms an elongated spine to which L12 dimers bind in a sequential fashion forming a multimeric L10(L12)X complex.

Its function is as follows. Forms part of the ribosomal stalk, playing a central role in the interaction of the ribosome with GTP-bound translation factors. This Coprothermobacter proteolyticus (strain ATCC 35245 / DSM 5265 / OCM 4 / BT) protein is Large ribosomal subunit protein uL10.